A 2311-amino-acid polypeptide reads, in one-letter code: Proto-oncogene tyrosine-protein kinase ROS (2311 aa).

An N-terminal signal peptide occupies residues Met1–Cys24. The Extracellular portion of the chain corresponds to Ser25–Asp1873. Residues Asn49, Asn65, Asn77, Asn123, Asn132, Asn265, Asn287, Asn307, Asn333, Asn377, Asn405, Asn480, Asn607, Asn628, Asn706, Asn714, Asn911, Asn940, Asn962, Asn971, Asn1110, Asn1154, Asn1180, Asn1233, Asn1255, Asn1282, Asn1316, Asn1470, Asn1509, Asn1588, Asn1628, Asn1682, Asn1696, and Asn1730 are each glycosylated (N-linked (GlcNAc...) asparagine). Fibronectin type-III domains are found at residues Lys110–Val202 and Pro203–Lys294. The Fibronectin type-III 3 domain occupies Leu571–Glu671. 2 Fibronectin type-III domains span residues Val952–Gly1047 and Ala1051–Ile1158. 4 Fibronectin type-III domains span residues Asp1459–Gly1569, Val1570–Phe1669, Thr1671–Gly1766, and Val1767–Thr1868. A compositionally biased stretch (low complexity) spans Ser1754–Thr1764. The segment at Ser1754–Trp1786 is disordered. Basic and acidic residues predominate over residues Lys1775–Trp1786. Asn1792, Asn1795, and Asn1822 each carry an N-linked (GlcNAc...) asparagine glycan. The chain crosses the membrane as a helical span at residues Ile1874–Trp1898. Over His1899–Val2311 the chain is Cytoplasmic. The Protein kinase domain maps to Leu1961–Leu2240. ATP contacts are provided by residues Leu1967–Val1975 and Lys1996. Residue Asp2095 is the Proton acceptor of the active site. A Phosphotyrosine; by autocatalysis modification is found at Tyr2131.

The protein belongs to the protein kinase superfamily. Tyr protein kinase family. Insulin receptor subfamily. As to quaternary structure, interacts with VAV3; constitutive interaction mediating VAV3 phosphorylation. As to expression, highest expression in kidney. Also expressed in gonad, thymus, bursa, brain and kidney.

Its subcellular location is the cell membrane. The catalysed reaction is L-tyrosyl-[protein] + ATP = O-phospho-L-tyrosyl-[protein] + ADP + H(+). Its function is as follows. Orphan receptor tyrosine kinase (RTK) that may activate several downstream signaling pathways related to cell differentiation, proliferation, growth and survival including the PI3 kinase-mTOR signaling pathway. Mediates the phosphorylation of PTPN11, an activator of this pathway. May also phosphorylate and activate the transcription factor STAT3 to control anchorage-independent cell growth. Mediates the phosphorylation and the activation of VAV3, a guanine nucleotide exchange factor regulating cell morphology. May activate other downstream signaling proteins including AKT1, MAPK1, MAPK3, IRS1, and PLCG2. This Gallus gallus (Chicken) protein is Proto-oncogene tyrosine-protein kinase ROS (ROS1).